We begin with the raw amino-acid sequence, 541 residues long: Paromamine 6'-oxidase (541 aa).

Residues Met-1–Trp-29 are disordered. The active-site Proton acceptor is His-470.

This sequence belongs to the GMC oxidoreductase family. Requires FAD as cofactor.

The catalysed reaction is 6'''-deamino-6'''-hydroxyneomycin C + O2 = 6'''-deamino-6'''-oxoneomycin C + H2O2. It catalyses the reaction paromamine + O2 = 6'-oxoparomamine + H2O2. It functions in the pathway antibiotic biosynthesis; neomycin biosynthesis. Functionally, glucosaminyl-6'-oxidase involved in the biosynthetic pathway of neomycin by mediating FAD-dependent dehydrogenation of paromamine to 6'-dehydro-6'-oxoparomamine. Works in combination with neamine transaminase to replace the 6-hydroxy group of paromamine with an amino group. Also able to collaborate with neomycin C transaminase to replace the 6'''-hydroxy group of 6'''-hydroxyneomycin C with an amino group. This is Paromamine 6'-oxidase (neoG) from Streptomyces fradiae (Streptomyces roseoflavus).